The primary structure comprises 294 residues: 4-hydroxy-tetrahydrodipicolinate synthase (294 aa).

Thr-44 is a binding site for pyruvate. Tyr-132 serves as the catalytic Proton donor/acceptor. Lys-160 functions as the Schiff-base intermediate with substrate in the catalytic mechanism. Residue Val-202 coordinates pyruvate.

This sequence belongs to the DapA family. In terms of assembly, homotetramer; dimer of dimers.

It localises to the cytoplasm. It carries out the reaction L-aspartate 4-semialdehyde + pyruvate = (2S,4S)-4-hydroxy-2,3,4,5-tetrahydrodipicolinate + H2O + H(+). It participates in amino-acid biosynthesis; L-lysine biosynthesis via DAP pathway; (S)-tetrahydrodipicolinate from L-aspartate: step 3/4. Its function is as follows. Catalyzes the condensation of (S)-aspartate-beta-semialdehyde [(S)-ASA] and pyruvate to 4-hydroxy-tetrahydrodipicolinate (HTPA). This is 4-hydroxy-tetrahydrodipicolinate synthase from Leptospira biflexa serovar Patoc (strain Patoc 1 / Ames).